A 188-amino-acid polypeptide reads, in one-letter code: Elongation factor P (188 aa).

Lys34 is modified (N6-(3,6-diaminohexanoyl)-5-hydroxylysine).

This sequence belongs to the elongation factor P family. Post-translationally, may be beta-lysylated on the epsilon-amino group of Lys-34 by the combined action of EpmA and EpmB, and then hydroxylated on the C5 position of the same residue by EpmC (if this protein is present). Lysylation is critical for the stimulatory effect of EF-P on peptide-bond formation. The lysylation moiety may extend toward the peptidyltransferase center and stabilize the terminal 3-CCA end of the tRNA. Hydroxylation of the C5 position on Lys-34 may allow additional potential stabilizing hydrogen-bond interactions with the P-tRNA.

Its subcellular location is the cytoplasm. Its pathway is protein biosynthesis; polypeptide chain elongation. In terms of biological role, involved in peptide bond synthesis. Alleviates ribosome stalling that occurs when 3 or more consecutive Pro residues or the sequence PPG is present in a protein, possibly by augmenting the peptidyl transferase activity of the ribosome. Modification of Lys-34 is required for alleviation. In Glaesserella parasuis serovar 5 (strain SH0165) (Haemophilus parasuis), this protein is Elongation factor P.